Reading from the N-terminus, the 89-residue chain is Small ribosomal subunit protein uS15 (89 aa).

The protein belongs to the universal ribosomal protein uS15 family. Part of the 30S ribosomal subunit. Forms a bridge to the 50S subunit in the 70S ribosome, contacting the 23S rRNA.

In terms of biological role, one of the primary rRNA binding proteins, it binds directly to 16S rRNA where it helps nucleate assembly of the platform of the 30S subunit by binding and bridging several RNA helices of the 16S rRNA. Forms an intersubunit bridge (bridge B4) with the 23S rRNA of the 50S subunit in the ribosome. In Thermus thermophilus (strain ATCC BAA-163 / DSM 7039 / HB27), this protein is Small ribosomal subunit protein uS15.